Consider the following 515-residue polypeptide: Maturase K (515 aa).

This sequence belongs to the intron maturase 2 family. MatK subfamily.

The protein localises to the plastid. It localises to the chloroplast. In terms of biological role, usually encoded in the trnK tRNA gene intron. Probably assists in splicing its own and other chloroplast group II introns. The protein is Maturase K of Trillium luteum (Yellow wakerobin).